A 574-amino-acid chain; its full sequence is G protein-coupled receptor kinase 4 (574 aa).

Met-1 carries the post-translational modification N-acetylmethionine. Residues 1–153 (MELENFVANN…ECAGIVCKYL (153 aa)) form an N-terminal region. Positions 51 to 171 (DFSSLCDKQP…QESTYFNRFL (121 aa)) constitute an RGS domain. Positions 186 to 448 (FRQYRVLGKG…VSAVKQHPIF (263 aa)) constitute a Protein kinase domain. Residues 192 to 200 (LGKGGFGEV) and Lys-215 each bind ATP. Asp-311 serves as the catalytic Proton acceptor. The AGC-kinase C-terminal domain occupies 449–514 (KDINFSRLEA…GSVTIPWQNE (66 aa)). Position 484 is a phosphoserine (Ser-484).

The protein belongs to the protein kinase superfamily. AGC Ser/Thr protein kinase family. GPRK subfamily. In terms of assembly, interacts with DRD3. Palmitoylated.

It is found in the cytoplasm. The protein localises to the cell cortex. It catalyses the reaction [G-protein-coupled receptor] + ATP = [G-protein-coupled receptor]-phosphate + ADP + H(+). Its activity is regulated as follows. Inhibited by heparin. Its function is as follows. Specifically phosphorylates the activated forms of G protein-coupled receptors. The chain is G protein-coupled receptor kinase 4 (Grk4) from Mus musculus (Mouse).